The primary structure comprises 487 residues: NAD-dependent histone deacetylase HST3 (487 aa).

In terms of domain architecture, Deacetylase sirtuin-type spans 15–336 (PADTSIKLHE…FLTQEQLDSE (322 aa)). Residues 40–59 (GAGISCNAGIPDFRSSDGLY) and 129–132 (QNID) contribute to the NAD(+) site. The Proton acceptor role is filled by H167. 4 residues coordinate Zn(2+): C175, C178, C200, and C203. Residues 261 to 263 (GTS), 291 to 293 (NKT), and C312 contribute to the NAD(+) site. Residues 397–406 (VESVSVKEEP) show a composition bias toward basic and acidic residues. A disordered region spans residues 397 to 487 (VESVSVKEEP…ARKGITLDQH (91 aa)). Positions 415–425 (HKPKQATKLKR) are enriched in basic residues. A compositionally biased stretch (polar residues) spans 448–459 (DQLSSPASSING).

This sequence belongs to the sirtuin family. Class I subfamily. Requires Zn(2+) as cofactor.

It localises to the cytoplasm. The protein localises to the nucleus. It carries out the reaction N(6)-acetyl-L-lysyl-[protein] + NAD(+) + H2O = 2''-O-acetyl-ADP-D-ribose + nicotinamide + L-lysyl-[protein]. In terms of biological role, NAD-dependent histone deacetylase, which could function in telomeric silencing, cell cycle progression and chromosome stability. This chain is NAD-dependent histone deacetylase HST3 (HST3), found in Candida albicans (strain SC5314 / ATCC MYA-2876) (Yeast).